The following is an 877-amino-acid chain: Transcriptional corepressor SEUSS (877 aa).

Disordered regions lie at residues 1–42 (MVPS…VSPR) and 272–295 (LKSMPQQRPQLPQQFQQQNLPLRP). Over residues 272–292 (LKSMPQQRPQLPQQFQQQNLP) the composition is skewed to low complexity. Positions 321-563 (PEDNNIEFWR…ETRTGPIESL (243 aa)) are dimerization. The Nuclear localization signal signature appears at 330–344 (RKFVAEYFAPNAKKR). Disordered stretches follow at residues 560–599 (IESLAKFPRRTGPSSALPGPSPQQASDQLRQQQQQQQQQQ), 612–633 (QQTVSQNTNSDQSSRQVALMQG), and 666–753 (GRHQ…NESS). Positions 582-618 (QQASDQLRQQQQQQQQQQQQQQQQQQQQQQQQTVSQN) form a coiled coil. Residues 590-599 (QQQQQQQQQQ) show a composition bias toward low complexity. Residues 614-633 (TVSQNTNSDQSSRQVALMQG) show a composition bias toward polar residues. Low complexity-rich tracts occupy residues 688-703 (QSPSSSGTMVPSSSQQ) and 711-725 (QSPTSSSNNNNPSQN). Polar residues predominate over residues 726–741 (GIPSVNHMGSTNSPAM).

Belongs to the adn1/SEU family. Forms a corepressor complex with LUG; LUG is the transcription repressor subunit and SEU the specific DNA-binding adapter. Interacts with AGL24-AP1 and SVP-AP1 dimers when complexed to SEU. Interacts with AP1/AGL7 and SEP3/AGL9. Binds to LUH. Expressed in root, leaves, seedlings, vegetative and reproductive shoot apical meristems, seeds, floral meristems and all floral organs.

The protein resides in the nucleus. The protein localises to the nucleoplasm. In terms of biological role, DNA-binding adapter subunit of the SEU-LUG transcriptional corepressor of the C class floral homeotic gene AGAMOUS during the early stages of floral meristem development. Is part of the A class cadastral complex that define the boundaries between the A and C class homeotic genes expression and function. Interacts together with APETALA2 and LEUNIG to repress AGAMOUS expression. In association with LUG, regulates petal shape through AGAMOUS-independent mechanisms. Controls cell division during petal development and enable the proper patterning of petal blade vasculature. Required for the proper elaboration of petal polarity along the adaxial/abaxial axis. May act through direct or indirect regulation of PHABULOSA and YAB1 and thus regulate cellular proliferation within the developing petal blade. In association with AINTEGUMENTA (ANT), coordinates patterning cues and cellular proliferation along the three positional axes of the developing gynoecium. Required for the development of the medial ridge and subsequent ovule initiation. This is Transcriptional corepressor SEUSS (SEU) from Arabidopsis thaliana (Mouse-ear cress).